Reading from the N-terminus, the 338-residue chain is Tetraacyldisaccharide 4'-kinase (338 aa).

63–70 (TVGGAGKT) is a binding site for ATP.

The protein belongs to the LpxK family.

It carries out the reaction a lipid A disaccharide + ATP = a lipid IVA + ADP + H(+). The protein operates within glycolipid biosynthesis; lipid IV(A) biosynthesis; lipid IV(A) from (3R)-3-hydroxytetradecanoyl-[acyl-carrier-protein] and UDP-N-acetyl-alpha-D-glucosamine: step 6/6. In terms of biological role, transfers the gamma-phosphate of ATP to the 4'-position of a tetraacyldisaccharide 1-phosphate intermediate (termed DS-1-P) to form tetraacyldisaccharide 1,4'-bis-phosphate (lipid IVA). The chain is Tetraacyldisaccharide 4'-kinase from Hahella chejuensis (strain KCTC 2396).